A 491-amino-acid polypeptide reads, in one-letter code: Spermatogenesis-defective protein 39 homolog (491 aa).

Position 21 is a phosphothreonine (threonine 21). Polar residues predominate over residues 72-81 (KETAGSSGST). The tract at residues 72–101 (KETAGSSGSTPEGREQLKGRNSFYTQLPKP) is disordered. Phosphothreonine is present on threonine 115. 3 positions are modified to phosphoserine: serine 119, serine 122, and serine 128. Residues 121–141 (QSLSDALSDTPAKSYAPELGR) are disordered. At threonine 130 the chain carries Phosphothreonine.

This sequence belongs to the SPE39 family. In terms of assembly, interacts with VPS33B. Associates with the homotypic fusion and vacuole protein sorting (HOPS) complex; impaired by VPS33B. Interacts with RAB11A.

It is found in the cytoplasm. The protein resides in the cytoplasmic vesicle. Its subcellular location is the early endosome. The protein localises to the recycling endosome. It localises to the late endosome. Functionally, proposed to be involved in endosomal maturation implicating in part VPS33B. In epithelial cells, the VPS33B:VIPAS39 complex may play a role in the apical RAB11A-dependent recycling pathway and in the maintenance of the apical-basolateral polarity. May play a role in lysosomal trafficking, probably via association with the core HOPS complex in a discrete population of endosomes; the functions seems to be independent of VPS33B. May play a role in vesicular trafficking during spermatogenesis. May be involved in direct or indirect transcriptional regulation of E-cadherin. The polypeptide is Spermatogenesis-defective protein 39 homolog (Vipas39) (Mus musculus (Mouse)).